The following is a 66-amino-acid chain: Photosystem II reaction center protein J (66 aa).

A helical membrane pass occupies residues 36 to 56; it reads LWLVATAGGIAVIFVLGIFFY.

The protein belongs to the PsbJ family. PSII is composed of 1 copy each of membrane proteins PsbA, PsbB, PsbC, PsbD, PsbE, PsbF, PsbH, PsbI, PsbJ, PsbK, PsbL, PsbM, PsbT, PsbX, PsbY, Psb30/Ycf12, peripheral proteins PsbO, CyanoQ (PsbQ), PsbU, PsbV and a large number of cofactors. It forms dimeric complexes.

It localises to the cellular thylakoid membrane. In terms of biological role, one of the components of the core complex of photosystem II (PSII). PSII is a light-driven water:plastoquinone oxidoreductase that uses light energy to abstract electrons from H(2)O, generating O(2) and a proton gradient subsequently used for ATP formation. It consists of a core antenna complex that captures photons, and an electron transfer chain that converts photonic excitation into a charge separation. This Prochlorococcus marinus (strain MIT 9215) protein is Photosystem II reaction center protein J.